We begin with the raw amino-acid sequence, 78 residues long: uncharacterized protein (78 aa).

The next 2 membrane-spanning stretches (helical) occupy residues 13–35 and 50–72; these read AGVG…PTGI and GTTF…FYYF.

It localises to the cell membrane. This is an uncharacterized protein from Pasteurella multocida (strain Pm70).